We begin with the raw amino-acid sequence, 216 residues long: ATP phosphoribosyltransferase (216 aa).

It belongs to the ATP phosphoribosyltransferase family. Short subfamily. In terms of assembly, heteromultimer composed of HisG and HisZ subunits.

It localises to the cytoplasm. The catalysed reaction is 1-(5-phospho-beta-D-ribosyl)-ATP + diphosphate = 5-phospho-alpha-D-ribose 1-diphosphate + ATP. Its pathway is amino-acid biosynthesis; L-histidine biosynthesis; L-histidine from 5-phospho-alpha-D-ribose 1-diphosphate: step 1/9. In terms of biological role, catalyzes the condensation of ATP and 5-phosphoribose 1-diphosphate to form N'-(5'-phosphoribosyl)-ATP (PR-ATP). Has a crucial role in the pathway because the rate of histidine biosynthesis seems to be controlled primarily by regulation of HisG enzymatic activity. This is ATP phosphoribosyltransferase from Rubrobacter xylanophilus (strain DSM 9941 / JCM 11954 / NBRC 16129 / PRD-1).